We begin with the raw amino-acid sequence, 255 residues long: 3-deoxy-manno-octulosonate cytidylyltransferase (255 aa).

This sequence belongs to the KdsB family.

The protein localises to the cytoplasm. It carries out the reaction 3-deoxy-alpha-D-manno-oct-2-ulosonate + CTP = CMP-3-deoxy-beta-D-manno-octulosonate + diphosphate. The protein operates within nucleotide-sugar biosynthesis; CMP-3-deoxy-D-manno-octulosonate biosynthesis; CMP-3-deoxy-D-manno-octulosonate from 3-deoxy-D-manno-octulosonate and CTP: step 1/1. It functions in the pathway bacterial outer membrane biogenesis; lipopolysaccharide biosynthesis. In terms of biological role, activates KDO (a required 8-carbon sugar) for incorporation into bacterial lipopolysaccharide in Gram-negative bacteria. In Polaromonas sp. (strain JS666 / ATCC BAA-500), this protein is 3-deoxy-manno-octulosonate cytidylyltransferase.